Here is a 169-residue protein sequence, read N- to C-terminus: Small ribosomal subunit protein uS9 (169 aa).

Disordered stretches follow at residues 1–29 (MVEPTGIEDVQEYDENSEEYPAEYTTETP) and 128–169 (MDPE…YSKR). A compositionally biased stretch (acidic residues) spans 9–21 (DVQEYDENSEEYP). The segment covering 150–169 (VERKKAGLKKARKAPQYSKR) has biased composition (basic residues).

It belongs to the universal ribosomal protein uS9 family.

This is Small ribosomal subunit protein uS9 from Thermobifida fusca (strain YX).